The following is an 86-amino-acid chain: Probable acyl carrier protein CCNA_01221 (86 aa).

Positions 6-83 constitute a Carrier domain; sequence TVTDLSLREI…DLSKLINDLR (78 aa). O-(pantetheine 4'-phosphoryl)serine is present on S43.

This sequence belongs to the acyl carrier protein (ACP) family.

It functions in the pathway lipid metabolism; sphingolipid metabolism. In terms of biological role, involved in de novo bacterial ceramide synthesis. This is Probable acyl carrier protein CCNA_01221 from Caulobacter vibrioides (strain NA1000 / CB15N) (Caulobacter crescentus).